We begin with the raw amino-acid sequence, 79 residues long: uncharacterized protein (79 aa).

The disordered stretch occupies residues 20-52; sequence TERGAGLSPAAPPDPSPAIAPTMAEGGVPSPGP.

This is an uncharacterized protein from Homo sapiens (Human).